The sequence spans 267 residues: MKVEAKKKFGQNFISDQNLINKIVSILGNDKDQLIIEIGPGTGALTKLLAQKYNKVVAIEIDTDMEPILKKEITNDNFELFLSDVLLVDFEKLIKEKRQHENQKVSIISNMPYYITSEILFRTLNVSDKLTKAVFMMQKEVAIRVCSYKGENNYNNLSVACEFYADKKYEFTVPKHMFYPVPKVDSAIISLTFNNKYTEQIKDKDKFLTFLRKIFNNRRKTILNNLSNVTNDKTKANEILDNLNIDKSLRPEVVGLEDFIRIYNKTR.

S-adenosyl-L-methionine-binding residues include asparagine 12, isoleucine 14, glycine 39, glutamate 60, aspartate 84, and asparagine 110.

It belongs to the class I-like SAM-binding methyltransferase superfamily. rRNA adenine N(6)-methyltransferase family. RsmA subfamily.

It is found in the cytoplasm. The catalysed reaction is adenosine(1518)/adenosine(1519) in 16S rRNA + 4 S-adenosyl-L-methionine = N(6)-dimethyladenosine(1518)/N(6)-dimethyladenosine(1519) in 16S rRNA + 4 S-adenosyl-L-homocysteine + 4 H(+). Its function is as follows. Specifically dimethylates two adjacent adenosines (A1518 and A1519) in the loop of a conserved hairpin near the 3'-end of 16S rRNA in the 30S particle. May play a critical role in biogenesis of 30S subunits. This is Ribosomal RNA small subunit methyltransferase A from Mesoplasma florum (strain ATCC 33453 / NBRC 100688 / NCTC 11704 / L1) (Acholeplasma florum).